A 359-amino-acid chain; its full sequence is Tropomodulin-1 (359 aa).

Residues 39 to 61 are disordered; that stretch reads PDNALLPAGLRQKDQTTKAPTGP. Positions 39 to 138 are tropomyosin-binding; that stretch reads PDNALLPAGL…CDIAAILGMH (100 aa).

The protein belongs to the tropomodulin family. As to quaternary structure, binds to the N-terminus of tropomyosin and to actin. Interacts with FLII.

It localises to the cytoplasm. The protein localises to the cytoskeleton. Blocks the elongation and depolymerization of the actin filaments at the pointed end. The Tmod/TM complex contributes to the formation of the short actin protofilament, which in turn defines the geometry of the membrane skeleton. May play an important role in regulating the organization of actin filaments by preferentially binding to a specific tropomyosin isoform at its N-terminus. This Bos taurus (Bovine) protein is Tropomodulin-1 (TMOD1).